The primary structure comprises 351 residues: D-threonate 4-phosphate dehydrogenase (351 aa).

Residues H147 and T148 each coordinate substrate. Residues H177, H221, and H276 each contribute to the a divalent metal cation site. Substrate-binding residues include K284, N293, and R302.

This sequence belongs to the PdxA family. PdxA2 subfamily. Homodimer. The cofactor is a divalent metal cation.

It carries out the reaction 4-O-phospho-D-threonate + NAD(+) = dihydroxyacetone phosphate + CO2 + NADH. Functionally, catalyzes the NAD-dependent oxidation and subsequent decarboxylation of D-threonate 4-phosphate to produce dihydroxyacetone phosphate (DHAP). Can also use 4-hydroxy-L-threonine 4-phosphate as substrate. In Bordetella bronchiseptica (strain ATCC BAA-588 / NCTC 13252 / RB50) (Alcaligenes bronchisepticus), this protein is D-threonate 4-phosphate dehydrogenase.